Reading from the N-terminus, the 1130-residue chain is Integrin alpha-6 (1130 aa).

Residues 1–23 (MAAAGQLCLLYLSAGLLSRLGAA) form the signal peptide. Residues 24-1050 (FNLDTREDNV…FPSKTVAQYS (1027 aa)) are Extracellular-facing. FG-GAP repeat units follow at residues 30–95 (EDNV…GPCT), 101–166 (NDAD…IEDD), 176–229 (DGRL…FFDM), 283–339 (EQPD…KSAH), 340–402 (LLPE…RWNN), 403–458 (VKPI…GINT), and 459–518 (KPTQ…VTPN). A glycan (N-linked (GlcNAc...) asparagine) is linked at Asn78. 3 cysteine pairs are disulfide-bonded: Cys86–Cys94, Cys131–Cys154, and Cys175–Cys188. N-linked (GlcNAc...) asparagine glycans are attached at residues Asn223 and Asn323. The Ca(2+) site is built by Asp363, Asn365, Asp367, and Asp371. A glycan (N-linked (GlcNAc...) asparagine) is linked at Asn409. Asp425, Asn427, Asp429, Tyr431, Asp433, Asp480, Asp482, Asn484, Tyr486, and Asp488 together coordinate Ca(2+). Cystine bridges form between Cys528–Cys535, Cys541–Cys601, Cys665–Cys671, and Cys765–Cys776. Residues Asn770, Asn787, Asn930, and Asn966 are each glycosylated (N-linked (GlcNAc...) asparagine). 2 disulfide bridges follow: Cys920–Cys967 and Cys973–Cys978. Residue Asn997 is glycosylated (N-linked (GlcNAc...) asparagine). The chain crosses the membrane as a helical span at residues 1051–1076 (GVPWWIILVAILAGILMLALLVFILW). Phosphoserine is present on residues Val1059 and Gly1064. The segment at 1077–1083 (KCGFFKR) is interaction with HPS5. Topologically, residues 1077–1130 (KCGFFKRSRYDDSVPRYHAVRIRKEEREIKDEKYIDNLEKKQWITKWNENESYS) are cytoplasmic. Cys1078 is lipidated: S-palmitoyl cysteine; by DHHC3. Positions 1079–1083 (GFFKR) match the GFFKR motif motif. Arg1103 bears the Phosphoserine mark.

Belongs to the integrin alpha chain family. Heterodimer of an alpha and a beta subunit. The alpha subunit is composed of a heavy and a light chain linked by a disulfide bond. Alpha-6 associates with either beta-1 (ITGB1) or beta-4 (ITGB4) to form ITGA6:ITGB1 and ITGA6:ITGB4, respectively. ITGA6:ITGB1 is found in a complex with CD9; interaction takes place in oocytes and is involved in sperm-egg fusion. ITGA6:ITGB4 is found in a ternary complex with NRG1 and ERBB3. ITGA6:ITGB4 is found in a ternary complex with IGF1 and IGF1R. ITGA6:ITGB4 interacts with IGF2. Interacts with ADAM9. Interacts with RAB21. Interacts with MDK. ITGA6:ITGB1 interacts with MDK; this interaction mediates MDK-induced neurite outgrowth. Interacts with CD82; this interaction down-regulates ITGA6-mediated cell adhesion. Isoforms containing segment A, but not segment B, are the major targets for PMA-induced phosphorylation. Phosphorylation occurs on 'Ser-1103' of isoform alpha-6X1X2A. Phosphorylation is not required for the induction of integrin alpha-6A/beta-1 high affinity but may reduce the affinity for ligand. In terms of processing, undergoes PLAU-mediated cleavage at residues Arg-634-635-Arg in a time-dependent manner to produce processed integrin alpha-6 (alpha6p). Production of alpha6p enhances prostate cancer cell invasion and migration. Post-translationally, palmitoylation by DHHC3 enhances stability and cell surface expression. As to expression, integrin alpha-6/beta-4 is predominantly expressed by epithelia. Isoforms containing segment X1 are ubiquitously expressed. Isoforms containing segment X1X2 are expressed in heart, kidney, placenta, colon, duodenum, myoblasts and myotubes, and in a limited number of cell lines; they are always coexpressed with the ubiquitous isoform containing segment X1. In some tissues (e.g. Salivary gland), isoforms containing cytoplasmic segment A and isoforms containing segment B are detected while in others, only isoforms containing one cytoplasmic segment are found (segment A in epidermis and segment B in kidney). Processed integrin alpha-6: Expressed at low levels in normal prostate tissue with elevated levels in prostate cancer tissue (at protein level).

It localises to the cell membrane. Functionally, integrin alpha-6/beta-1 (ITGA6:ITGB1) is a receptor for laminin on platelets. Integrin alpha-6/beta-1 (ITGA6:ITGB1) is present in oocytes and is involved in sperm-egg fusion. Integrin alpha-6/beta-4 (ITGA6:ITGB4) is a receptor for laminin in epithelial cells and it plays a critical structural role in the hemidesmosome. ITGA6:ITGB4 binds to NRG1 (via EGF domain) and this binding is essential for NRG1-ERBB signaling. ITGA6:ITGB4 binds to IGF1 and this binding is essential for IGF1 signaling. ITGA6:ITGB4 binds to IGF2 and this binding is essential for IGF2 signaling. The protein is Integrin alpha-6 (ITGA6) of Homo sapiens (Human).